A 347-amino-acid chain; its full sequence is Probable RNA methyltransferase Lcho_2507 (347 aa).

Residue E89 is the Proton acceptor of the active site. Residues 92 to 318 enclose the Radical SAM core domain; sequence LLPRDGLCVS…TKLRQSAGQD (227 aa). A disulfide bond links C99 and C323. C106, C110, and C113 together coordinate [4Fe-4S] cluster. Residues 151-152, S181, 204-206, and N280 each bind S-adenosyl-L-methionine; these read GE and SLH. C323 functions as the S-methylcysteine intermediate in the catalytic mechanism.

It belongs to the radical SAM superfamily. RlmN family. [4Fe-4S] cluster serves as cofactor.

It is found in the cytoplasm. In Leptothrix cholodnii (strain ATCC 51168 / LMG 8142 / SP-6) (Leptothrix discophora (strain SP-6)), this protein is Probable RNA methyltransferase Lcho_2507.